Here is a 146-residue protein sequence, read N- to C-terminus: Ribosomal RNA large subunit methyltransferase H (146 aa).

S-adenosyl-L-methionine is bound by residues leucine 60, glycine 93, and 112–117; that span reads MGKMTL.

The protein belongs to the RNA methyltransferase RlmH family. In terms of assembly, homodimer.

It localises to the cytoplasm. The catalysed reaction is pseudouridine(1915) in 23S rRNA + S-adenosyl-L-methionine = N(3)-methylpseudouridine(1915) in 23S rRNA + S-adenosyl-L-homocysteine + H(+). In terms of biological role, specifically methylates the pseudouridine at position 1915 (m3Psi1915) in 23S rRNA. This is Ribosomal RNA large subunit methyltransferase H from Koribacter versatilis (strain Ellin345).